The chain runs to 383 residues: Homeobox protein knotted-1-like 5 (383 aa).

Disordered stretches follow at residues 1–35 (MSFNSSHLLPPQEDLPLRHFTDQSQQPPPQRHFSE) and 52–73 (TTADSDLAPPHRNGDNSVADTN). In terms of domain architecture, ELK spans 281-301 (ELKHELKQGFKEKIVDIREEI). Residues 302-365 (MRKRRAGKLP…NQRKRNWNSN (64 aa)) constitute a DNA-binding region (homeobox; TALE-type). The segment at 361–383 (NWNSNSSTSSTLTKNKRKRTGKS) is disordered. Positions 362–373 (WNSNSSTSSTLT) are enriched in low complexity. Residues 374 to 383 (KNKRKRTGKS) show a composition bias toward basic residues.

The protein belongs to the TALE/KNOX homeobox family. As to quaternary structure, may form heterodimeric complex with the TALE/BELL protein BEL1, BLH1 and BLH2. Interacts with OFP1, OFP2, OFP3 and OFP4.

The protein resides in the nucleus. This chain is Homeobox protein knotted-1-like 5 (KNAT5), found in Arabidopsis thaliana (Mouse-ear cress).